A 450-amino-acid chain; its full sequence is Tubulin alpha-5 chain (450 aa).

GTP contacts are provided by Gln-11, Glu-71, Gly-144, Thr-145, Thr-179, Asn-206, and Asn-228. A Mg(2+)-binding site is contributed by Glu-71. Glu-254 is a catalytic residue.

This sequence belongs to the tubulin family. In terms of assembly, dimer of alpha and beta chains. A typical microtubule is a hollow water-filled tube with an outer diameter of 25 nm and an inner diameter of 15 nM. Alpha-beta heterodimers associate head-to-tail to form protofilaments running lengthwise along the microtubule wall with the beta-tubulin subunit facing the microtubule plus end conferring a structural polarity. Microtubules usually have 13 protofilaments but different protofilament numbers can be found in some organisms and specialized cells. It depends on Mg(2+) as a cofactor. In terms of processing, undergoes a tyrosination/detyrosination cycle, the cyclic removal and re-addition of a C-terminal tyrosine residue by the enzymes tubulin tyrosine carboxypeptidase (TTCP) and tubulin tyrosine ligase (TTL), respectively.

The protein localises to the cytoplasm. Its subcellular location is the cytoskeleton. It catalyses the reaction GTP + H2O = GDP + phosphate + H(+). Functionally, tubulin is the major constituent of microtubules, a cylinder consisting of laterally associated linear protofilaments composed of alpha- and beta-tubulin heterodimers. Microtubules grow by the addition of GTP-tubulin dimers to the microtubule end, where a stabilizing cap forms. Below the cap, tubulin dimers are in GDP-bound state, owing to GTPase activity of alpha-tubulin. The chain is Tubulin alpha-5 chain (TUBA5) from Zea mays (Maize).